We begin with the raw amino-acid sequence, 342 residues long: Dihydroorotate dehydrogenase (quinone) (342 aa).

Residues 65–69 and threonine 89 each bind FMN; that span reads AGLDK. Residue lysine 69 coordinates substrate. A substrate-binding site is contributed by 114–118; the sequence is NRMGF. FMN is bound by residues asparagine 142 and asparagine 175. Asparagine 175 is a substrate binding site. The active-site Nucleophile is serine 178. Position 180 (asparagine 180) interacts with substrate. Positions 220 and 248 each coordinate FMN. 249–250 contributes to the substrate binding site; the sequence is NT. FMN is bound by residues glycine 271, glycine 300, and 321–322; that span reads YT.

It belongs to the dihydroorotate dehydrogenase family. Type 2 subfamily. As to quaternary structure, monomer. FMN serves as cofactor.

The protein localises to the cell membrane. It carries out the reaction (S)-dihydroorotate + a quinone = orotate + a quinol. It participates in pyrimidine metabolism; UMP biosynthesis via de novo pathway; orotate from (S)-dihydroorotate (quinone route): step 1/1. Catalyzes the conversion of dihydroorotate to orotate with quinone as electron acceptor. In Burkholderia pseudomallei (strain 668), this protein is Dihydroorotate dehydrogenase (quinone).